Here is a 490-residue protein sequence, read N- to C-terminus: Probable cytochrome P450 518B1 (490 aa).

The helical transmembrane segment at 2–22 (LTNIIILIILYLFYDFCYKNF) threads the bilayer. Cysteine 437 contributes to the heme binding site.

This sequence belongs to the cytochrome P450 family. Heme is required as a cofactor.

The protein resides in the membrane. The protein is Probable cytochrome P450 518B1 (cyp518B1) of Dictyostelium discoideum (Social amoeba).